Here is a 3132-residue protein sequence, read N- to C-terminus: Toxin CdiA (3132 aa).

Positions 1-32 (MHQPPVRFTYRLLSYLVSAIIAGQPLLPAVGA) form a signal peptide, signal. Residues 36 to 322 (PQNGAGMDKA…AGGNLSVTGT (287 aa)) form a two-partner system transport domain (TPS) region. The tract at residues 351-1378 (GELTAGQNAM…ITMNTAHLLN (1028 aa)) is FHA-1. The interval 1379-1635 (SWDAISASHE…LSLSGASVSS (257 aa)) is receptor-binding domain (RBD). Positions 1636–1820 (YPLPSGNNGY…LSPEDITLHN (185 aa)) are YP domain. A periplasmic FHA-1 repeat (pFR) region spans residues 1821 to 1859 (GSVISGNNVQLAGGNITNSGSSINAQNDLLLDRTGSIDN). Residues 1930 to 2526 (RATDSLFMGA…QDSDRYDSRQ (597 aa)) are FHA-2. Disordered stretches follow at residues 2195–2228 (TGTGGIGFTTGSSKTTHDRREAGTTQSQSASTIG) and 2456–2497 (AGIN…SGAQ). Polar residues-rich tracts occupy residues 2217-2228 (GTTQSQSASTIG) and 2483-2497 (VSLTSGRDTTLSGAQ). The interval 2862-2904 (DNLSEQERQQISMLATIASGIAGGLVGNSTSAAGTGAQAGRNS) is pre-toxin (PT) domain. The VENN CT cleavage motif signature appears at 2905–2908 (VENN). A C-terminal effector domain (CT) region spans residues 2909-3121 (AMSGLEGFGT…IGTVTDYQIE (213 aa)).

The protein in the N-terminal section; belongs to the CdiA toxin family. Probably interacts with cognate immunity protein CdiI. In terms of processing, expressed as 303 kDa protein which can be processed to 284 kDa and 195 kDa forms.

The protein resides in the secreted. The protein localises to the target cell. Its subcellular location is the target cell cytoplasm. Toxic component of a toxin-immunity protein module, which functions as a cellular contact-dependent growth inhibition (CDI) system. CDI modules allow bacteria to communicate with and inhibit the growth of closely related neighboring bacteria (target cell counts decrease 1000- to 10(5)-fold) in a contact-dependent fashion. Inhibitory cells must be in logarithmic (not stationary) phase to inhibit growth of their targets, but protein synthesis is not necessary. The presence of P or S but not type 1 pili protects the target cells against growth inhibition for this CDI. BamA on the outer membrane of target cells acts as a receptor for CdiA, while target cell multidrug efflux pump AcrB facilitates its transport into the cytoplasm. Outer membrane receptor function is dependent on extracellular loops of BamA. Cells undergoing CDI show a 2- to 5-fold reversible decrease in aerobic respiration, proton motive force and steady-state ATP levels, suggesting this CT module is an ionophore that disrupts the target cell's inner cell membrane. Growth recovery requires an energy source. Cells expressing this protein in the absence of CdiI initially form filaments, some of which contain multiple nucleoids, while others are devoid of nucleoids. CDI cells induce the phage shock response, but pspA is not required for recovery from CDI. CDI is neutralized by its cognate immunity protein CdiI, but not by non-cognate CdiI from other bacteria with different CDI systems. Plays a role in biofilm formation, a region N-terminal to residue 644 is implicated in this receptor-independent cell adhesion. Its function is as follows. The CdiA protein is thought to be exported from the cell through the central lumen of CdiB, the other half of its two-partner system (TPS). The TPS domain probably remains associated with CdiB while the FHA-1 domain forms an extended filament (33 nm long) with the receptor-binding domain (RBD) at its extremity; in the secretion arrested state the C-terminus of the RBD and YP domains form a hairpin-like structure as the FHA-2, PT and CT domains are periplasmic. The YP domain is probably responsible for this arrest at the point where it re-enters the host cell periplasm. Upon binding to a target cell outer membrane receptor (BamA for this CDI) a signal is transmitted to activate secretion. The filament becomes about 5 nm longer, the rest of CdiA is secreted and the FHA-2 domain becomes stably associated with the target cell's outer membrane where it facilitates entry of the toxic CT domain into the target cell periplasm. From there the toxic CT domain is cleaved and gains access to the target cell cytoplasm via an inner membrane protein (multidrug efflux pump AcrB for this CDI). The chain is Toxin CdiA from Escherichia coli.